Here is a 595-residue protein sequence, read N- to C-terminus: Mitoguardin 1 (595 aa).

2 helical membrane passes run 11–31 (LPIKLAALHFLDLPLSVYYSL) and 38–58 (TGTKKLFAATAFGAVSLIIIA).

Belongs to the mitoguardin family. In terms of assembly, homodimer and heterodimer; forms heterodimers with miga2.

The protein localises to the mitochondrion outer membrane. Its function is as follows. Regulator of mitochondrial fusion: acts by forming homo- and heterodimers at the mitochondrial outer membrane and facilitating the formation of pld6/MitoPLD dimers. May act by regulating phospholipid metabolism via pld6/MitoPLD. This chain is Mitoguardin 1, found in Danio rerio (Zebrafish).